Consider the following 60-residue polypeptide: Light-harvesting protein B-800/850 alpha chain (60 aa).

At 1-14 the chain is on the cytoplasmic side; the sequence is MNNAKIWTVVKPST. Residues 15–35 traverse the membrane as a helical segment; sequence GIPLILGAVAVAALIVHAGLL. His31 is a binding site for a bacteriochlorophyll. At 36 to 60 the chain is on the periplasmic side; it reads TNTTWFANYWNGNPMATVVAVAPAQ.

Belongs to the antenna complex alpha subunit family. The core complex is formed by different alpha and beta chains, binding bacteriochlorophyll molecules, and arranged most probably in tetrameric structures disposed around the reaction center. The non-pigmented gamma chains may constitute additional components.

The protein resides in the cell inner membrane. Antenna complexes are light-harvesting systems, which transfer the excitation energy to the reaction centers. The sequence is that of Light-harvesting protein B-800/850 alpha chain (pucA) from Rhodobacter capsulatus (Rhodopseudomonas capsulata).